The sequence spans 250 residues: Triosephosphate isomerase (250 aa).

9-11 lines the substrate pocket; that stretch reads NWK. H94 acts as the Electrophile in catalysis. E165 (proton acceptor) is an active-site residue. Substrate contacts are provided by residues G171, S211, and 232–233; that span reads GG.

Belongs to the triosephosphate isomerase family. As to quaternary structure, homodimer.

The protein resides in the cytoplasm. The enzyme catalyses D-glyceraldehyde 3-phosphate = dihydroxyacetone phosphate. It participates in carbohydrate biosynthesis; gluconeogenesis. It functions in the pathway carbohydrate degradation; glycolysis; D-glyceraldehyde 3-phosphate from glycerone phosphate: step 1/1. Involved in the gluconeogenesis. Catalyzes stereospecifically the conversion of dihydroxyacetone phosphate (DHAP) to D-glyceraldehyde-3-phosphate (G3P). This chain is Triosephosphate isomerase, found in Alkalilimnicola ehrlichii (strain ATCC BAA-1101 / DSM 17681 / MLHE-1).